Consider the following 257-residue polypeptide: Acetylglutamate kinase (257 aa).

Substrate is bound by residues 43-44 (GG), Arg65, and Asn157. ATP is bound by residues 180–185 (DVSGIL) and 208–210 (IIT).

Belongs to the acetylglutamate kinase family. ArgB subfamily. Homodimer.

Its subcellular location is the cytoplasm. It carries out the reaction N-acetyl-L-glutamate + ATP = N-acetyl-L-glutamyl 5-phosphate + ADP. The protein operates within amino-acid biosynthesis; L-arginine biosynthesis; N(2)-acetyl-L-ornithine from L-glutamate: step 2/4. Catalyzes the ATP-dependent phosphorylation of N-acetyl-L-glutamate. The polypeptide is Acetylglutamate kinase (Pectobacterium carotovorum subsp. carotovorum (strain PC1)).